A 1233-amino-acid chain; its full sequence is STE20-like serine/threonine-protein kinase (1233 aa).

Position 14 is a phosphoserine (serine 14). Residues 34-292 enclose the Protein kinase domain; the sequence is WEIIGELGDG…TSQLLQHPFV (259 aa). Residues 40–48 and lysine 63 each bind ATP; that span reads LGDGAFGKV. The Proton acceptor role is filled by aspartate 155. The residue at position 183 (threonine 183) is a Phosphothreonine. A Phosphoserine modification is found at serine 189. Residues 309–351 are disordered; the sequence is AEVTEEVEDGKEEDEEEEAENALPIPANKRASSDLSIASSEED. Positions 312–328 are enriched in acidic residues; it reads TEEVEDGKEEDEEEEAE. Residues serine 340, serine 341, serine 344, serine 347, serine 348, serine 354, and serine 372 each carry the phosphoserine modification. Residues 363-399 are compositionally biased toward basic and acidic residues; it reads VSERTEQSTSEDKFSNKILNEKPTTDGPEKAVDEHAS. Disordered regions lie at residues 363–453, 498–650, 663–761, and 772–791; these read VSER…ENNR, VSQE…SIEE, ALGS…SGDL, and AKDSGSVSLQETRRQKKTLK. Residues 432 to 441 show a composition bias toward polar residues; sequence PDTQDQQTVD. A compositionally biased stretch (basic and acidic residues) spans 518 to 529; the sequence is LTKEETQEKLGK. Phosphoserine is present on residues serine 543, serine 561, and serine 566. Residues 598–607 are compositionally biased toward basic and acidic residues; it reads GGERVEDKQP. Residues 619–630 are compositionally biased toward polar residues; it reads QLTSTSETTRAT. 3 positions are modified to phosphoserine: serine 643, serine 647, and serine 666. Residues 690-701 show a composition bias toward low complexity; sequence AESQAPAASQPS. Positions 746 to 761 are enriched in polar residues; the sequence is TDSGTGSTVENSSGDL. A phosphoserine mark is found at serine 775 and serine 777. Position 812 is a phosphothreonine (threonine 812). Phosphoserine is present on serine 816. Residues 824–1067 are a coiled coil; it reads LRRQELRELR…LKNRQTQERA (244 aa). A UVR domain is found at 873–908; that stretch reads DQEIENLEKQQKQTIERLEQEHTNRLRDEAKRIKGE. Positions 944–963 are disordered; it reads KRRKEELAQSQHAQEQEFVQ. Residues 954-963 show a composition bias toward low complexity; the sequence is QHAQEQEFVQ. Residue threonine 1095 is modified to Phosphothreonine. Residues 1107 to 1181 adopt a coiled-coil conformation; it reads AAQEEKRQKN…ELKEWREKLR (75 aa). Positions 1109–1129 are disordered; the sequence is QEEKRQKNERMAQHQKHESQM.

Belongs to the protein kinase superfamily. STE Ser/Thr protein kinase family. STE20 subfamily. Proteolytically cleaved by caspase-3. In terms of processing, autophosphorylated. As to expression, ubiquitously expressed.

The protein resides in the cytoplasm. The catalysed reaction is L-seryl-[protein] + ATP = O-phospho-L-seryl-[protein] + ADP + H(+). It catalyses the reaction L-threonyl-[protein] + ATP = O-phospho-L-threonyl-[protein] + ADP + H(+). Functionally, mediates apoptosis and actin stress fiber dissolution. The protein is STE20-like serine/threonine-protein kinase (Slk) of Mus musculus (Mouse).